We begin with the raw amino-acid sequence, 340 residues long: Aspartate-semialdehyde dehydrogenase (340 aa).

NADP(+)-binding positions include 11 to 14 (TGEV) and 39 to 40 (RS). R100 contributes to the phosphate binding site. The active-site Acyl-thioester intermediate is the C131. Q158 lines the substrate pocket. An NADP(+)-binding site is contributed by 161-162 (SG). A phosphate-binding site is contributed by K216. A substrate-binding site is contributed by R238. Residue H245 is the Proton acceptor of the active site. N318 contacts NADP(+).

This sequence belongs to the aspartate-semialdehyde dehydrogenase family. In terms of assembly, homodimer.

The catalysed reaction is L-aspartate 4-semialdehyde + phosphate + NADP(+) = 4-phospho-L-aspartate + NADPH + H(+). Its pathway is amino-acid biosynthesis; L-lysine biosynthesis via DAP pathway; (S)-tetrahydrodipicolinate from L-aspartate: step 2/4. It functions in the pathway amino-acid biosynthesis; L-methionine biosynthesis via de novo pathway; L-homoserine from L-aspartate: step 2/3. It participates in amino-acid biosynthesis; L-threonine biosynthesis; L-threonine from L-aspartate: step 2/5. Its function is as follows. Catalyzes the NADPH-dependent formation of L-aspartate-semialdehyde (L-ASA) by the reductive dephosphorylation of L-aspartyl-4-phosphate. This chain is Aspartate-semialdehyde dehydrogenase, found in Aquifex aeolicus (strain VF5).